A 113-amino-acid chain; its full sequence is uncharacterized protein (113 aa).

It belongs to the ycf68 family.

The protein resides in the plastid. It is found in the chloroplast. This is an uncharacterized protein from Eucalyptus globulus subsp. globulus (Tasmanian blue gum).